Consider the following 337-residue polypeptide: ATP-dependent 6-phosphofructokinase (337 aa).

Gly11 is an ATP binding site. 21 to 25 is a binding site for ADP; that stretch reads RAVVR. Residues 72-73 and 102-105 contribute to the ATP site; these read RY and GDGS. Asp103 contacts Mg(2+). Residue 125–127 participates in substrate binding; the sequence is TID. Catalysis depends on Asp127, which acts as the Proton acceptor. Arg154 provides a ligand contact to ADP. Residues Arg162 and 169-171 each bind substrate; that span reads MGR. ADP contacts are provided by residues 185-187, Arg212, and 214-216; these read GAD and KNH. Substrate is bound by residues Glu223, Arg245, and 251–254; that span reads HILR.

Belongs to the phosphofructokinase type A (PFKA) family. ATP-dependent PFK group I subfamily. Prokaryotic clade 'B1' sub-subfamily. In terms of assembly, homotetramer. Mg(2+) serves as cofactor.

The protein resides in the cytoplasm. It carries out the reaction beta-D-fructose 6-phosphate + ATP = beta-D-fructose 1,6-bisphosphate + ADP + H(+). The protein operates within carbohydrate degradation; glycolysis; D-glyceraldehyde 3-phosphate and glycerone phosphate from D-glucose: step 3/4. Allosterically activated by ADP and other diphosphonucleosides, and allosterically inhibited by phosphoenolpyruvate. Functionally, catalyzes the phosphorylation of D-fructose 6-phosphate to fructose 1,6-bisphosphate by ATP, the first committing step of glycolysis. The sequence is that of ATP-dependent 6-phosphofructokinase from Streptococcus equi subsp. zooepidemicus (strain H70).